Consider the following 645-residue polypeptide: Acetyl-coenzyme A synthetase (645 aa).

CoA is bound by residues 190–193 (RGGR) and threonine 308. ATP is bound by residues 384–386 (GEP), 408–413 (DTWWQT), aspartate 497, and arginine 512. Serine 520 serves as a coordination point for CoA. Arginine 523 contacts ATP. Valine 534, histidine 536, and valine 539 together coordinate Mg(2+). Lysine 606 bears the N6-acetyllysine mark.

Belongs to the ATP-dependent AMP-binding enzyme family. The cofactor is Mg(2+). Post-translationally, acetylated. Deacetylation by the SIR2-homolog deacetylase activates the enzyme.

It carries out the reaction acetate + ATP + CoA = acetyl-CoA + AMP + diphosphate. In terms of biological role, catalyzes the conversion of acetate into acetyl-CoA (AcCoA), an essential intermediate at the junction of anabolic and catabolic pathways. AcsA undergoes a two-step reaction. In the first half reaction, AcsA combines acetate with ATP to form acetyl-adenylate (AcAMP) intermediate. In the second half reaction, it can then transfer the acetyl group from AcAMP to the sulfhydryl group of CoA, forming the product AcCoA. In Saccharophagus degradans (strain 2-40 / ATCC 43961 / DSM 17024), this protein is Acetyl-coenzyme A synthetase.